A 263-amino-acid chain; its full sequence is MLQDVMKKSKKIVIKIGSNTLSNVDGTINHDFIEALCQQVAFLVGEGKQVVIVTSGARIAGISRTNKWSRKEDMNYKQALCAIGQVELMSAYNSHFSHHGIYIGQLLLTREDFFDKTRNLNIRNTLFTLVDEGIVPIINENDTVSVEQIKIGDNDTLAAYTATLWNADLLILLSDIDGIYNKNPKEYEDAELLEQVQNIDDMLKEIEVGETNSFGTGGIETKIEAARIVNRYNIPMILGNGKNKEILMKLYQNEAKATIFFRE.

Lys15 is an ATP binding site. 3 residues coordinate substrate: Ser55, Asp142, and Asn154. ATP contacts are provided by residues 174–175 and 216–222; these read SD and TGGIETK.

This sequence belongs to the glutamate 5-kinase family.

It localises to the cytoplasm. It catalyses the reaction L-glutamate + ATP = L-glutamyl 5-phosphate + ADP. The protein operates within amino-acid biosynthesis; L-proline biosynthesis; L-glutamate 5-semialdehyde from L-glutamate: step 1/2. In terms of biological role, catalyzes the transfer of a phosphate group to glutamate to form L-glutamate 5-phosphate. This is Glutamate 5-kinase from Alkaliphilus oremlandii (strain OhILAs) (Clostridium oremlandii (strain OhILAs)).